The sequence spans 794 residues: Zinc finger and BTB domain-containing protein 17 (794 aa).

The 104-residue stretch at 1 to 104 folds into the BTB domain; the sequence is MDFPQHSQRV…VASFLQMQDI (104 aa). Residues 116 to 285 form a disordered region; sequence EPSSTTGESA…QNLRSGTYGD (170 aa). Residues 132 to 142 show a composition bias toward basic and acidic residues; it reads GGDKRAKDEKA. Over residues 203–216 the composition is skewed to low complexity; sequence SSMAAAEAEALSES. The span at 243-252 shows a compositional bias: basic and acidic residues; the sequence is VKEEGMHLDN. The segment covering 254–263 has biased composition (acidic residues); sequence EPPEENEESA. An interaction with MYC region spans residues 260-299; that stretch reads EESAGTDSGQELGMEGQNLRSGTYGDRTESKAYGSIIHKC. 13 C2H2-type zinc fingers span residues 297–319, 325–347, 353–375, 381–403, 409–431, 437–459, 465–487, 493–515, 519–543, 549–571, 577–599, 605–628, and 708–730; these read HKCE…IRIH, FSCR…EKTH, YGCE…KKRH, YRCG…QLVH, YQCD…LETH, HKCP…LKIH, LKCR…LRIH, YVCT…VRIH, KPCQ…VRQH, YVCE…IRHH, HKCS…IIIH, YLCD…KTVH, and YACD…VRIH. K388 participates in a covalent cross-link: Glycyl lysine isopeptide (Lys-Gly) (interchain with G-Cter in ubiquitin). K472 participates in a covalent cross-link: Glycyl lysine isopeptide (Lys-Gly) (interchain with G-Cter in ubiquitin). Residues 628–709 are interaction with MYC; sequence HQGKAGIKIL…EDPNTHILYA (82 aa). Residues 628–794 form an interaction with HCFC1 region; sequence HQGKAGIKIL…TAPDCLPPAE (167 aa). The segment at 769–794 is disordered; the sequence is PRDGTEGQPTLAESPPTAPDCLPPAE. Positions 784–794 are enriched in pro residues; it reads PTAPDCLPPAE.

It belongs to the krueppel C2H2-type zinc-finger protein family. Homooligomerizes (via the BTB/POZ domain), multimerization is required for DNA binding. Binds to the C-terminal helix-loop-helix motif of MYC which inhibits ZBTB17 transactivation and growth arrest activities and renders it insoluble in the nucleus. Also interacts with HCFC1, MAGEA4 and TMPRSS11A. Interacts (via the C-terminal zinc fingers) with GFI1; the interaction results in the recruitment of MYC to the CDKN1A/p21 and CDKN1B promoters and repression of transcription. Interacts with TRAF2, interfering with the binding of UBC13 to TRAF2, and inhibiting TRAF2 E3 ligase activity. Interacts with BCL6; the interaction inhibits ZBTB17 transactivation activity on target genes involved in cell cycle arrest. Interacts with ZBTB49; this interaction blocks ZBTB17-mediated repression of RB1. Undergoes 'Lys-48'-linked polyubiquitination at Lys-388 and Lys-472 and subsequent proteasomal degradation in a TRAF2-dependent manner and upon TNFA stimulation. Found in all the embryonic and adult tissues examined.

The protein resides in the nucleus. Its function is as follows. Transcription factor that can function as an activator or repressor depending on its binding partners, and by targeting negative regulators of cell cycle progression. Has been shown to bind to the promoters of adenovirus major late protein and cyclin D1 and activate transcription. Required for early embryonic development during gastrulation. Plays a critical role in early lymphocyte development, where it is essential to prevent apoptosis in lymphoid precursors, allowing them to survive in response to IL7 and undergo proper lineage commitment. Represses RB1 transcription; this repression can be blocked by interaction with ZBTB49. In Mus musculus (Mouse), this protein is Zinc finger and BTB domain-containing protein 17 (Zbtb17).